Reading from the N-terminus, the 265-residue chain is Very long chain fatty acid elongase 6 (265 aa).

N-linked (GlcNAc...) asparagine glycosylation occurs at asparagine 2. A run of 7 helical transmembrane segments spans residues 34–51, 70–90, 111–131, 137–156, 159–179, 197–217, and 232–252; these read FLFS…RHLM, LAVF…YILM, FWAY…IFII, LIFL…WYSY, MVAG…VMYS, FITL…YLVF, and IIWS…FFFE.

Belongs to the ELO family. ELOVL6 subfamily. Post-translationally, N-Glycosylated.

Its subcellular location is the endoplasmic reticulum membrane. It carries out the reaction a very-long-chain acyl-CoA + malonyl-CoA + H(+) = a very-long-chain 3-oxoacyl-CoA + CO2 + CoA. The enzyme catalyses hexadecanoyl-CoA + malonyl-CoA + H(+) = 3-oxooctadecanoyl-CoA + CO2 + CoA. It catalyses the reaction (9Z)-hexadecenoyl-CoA + malonyl-CoA + H(+) = 3-oxo-(11Z)-octadecenoyl-CoA + CO2 + CoA. The catalysed reaction is dodecanoyl-CoA + malonyl-CoA + H(+) = 3-oxotetradecanoyl-CoA + CO2 + CoA. It carries out the reaction tetradecanoyl-CoA + malonyl-CoA + H(+) = 3-oxohexadecanoyl-CoA + CO2 + CoA. The enzyme catalyses (9Z)-octadecenoyl-CoA + malonyl-CoA + H(+) = 3-oxo-(11Z)-eicosenoyl-CoA + CO2 + CoA. It catalyses the reaction (9Z,12Z)-octadecadienoyl-CoA + malonyl-CoA + H(+) = (11Z,14Z)-3-oxoicosa-11,14-dienoyl-CoA + CO2 + CoA. The catalysed reaction is (9Z,12Z,15Z)-octadecatrienoyl-CoA + malonyl-CoA + H(+) = (11Z,14Z,17Z)-3-oxoeicosatrienoyl-CoA + CO2 + CoA. It functions in the pathway lipid metabolism; fatty acid biosynthesis. With respect to regulation, the reaction is stimulated by the presence of HSD17B12, the enzyme catalyzing the second step of the elongation cycle. Its function is as follows. Catalyzes the first and rate-limiting reaction of the four reactions that constitute the long-chain fatty acids elongation cycle. This endoplasmic reticulum-bound enzymatic process allows the addition of 2 carbons to the chain of long- and very long-chain fatty acids (VLCFAs) per cycle. Condensing enzyme that elongates fatty acids with 12, 14 and 16 carbons with higher activity toward C16:0 acyl-CoAs. Catalyzes the synthesis of unsaturated C16 long chain fatty acids and, to a lesser extent, C18:0 and those with low desaturation degree. May participate in the production of saturated and monounsaturated VLCFAs of different chain lengths that are involved in multiple biological processes as precursors of membrane lipids and lipid mediators. The sequence is that of Very long chain fatty acid elongase 6 from Gallus gallus (Chicken).